Consider the following 614-residue polypeptide: uncharacterized protein (614 aa).

This is an uncharacterized protein from Archaeoglobus fulgidus (strain ATCC 49558 / DSM 4304 / JCM 9628 / NBRC 100126 / VC-16).